The following is a 212-amino-acid chain: Amelotin (212 aa).

Positions M1–S16 are cleaved as a signal peptide. 2 disordered regions span residues P23–Q42 and P141–K212. Polar residues-rich tracts occupy residues T33–Q42 and P165–A178.

The protein belongs to the amelotin family. In terms of processing, O-glycosylated. Phosphorylated by FAM20C in vitro. In terms of tissue distribution, highest expression in the mandible. Found in the basal lamina of maturation stage ameloblasts of incisors and unerupted molars. Also found in the internal basal lamina of junctional epithelium in molars.

Its subcellular location is the secreted. Functionally, is a promoter of calcium phosphate mineralization, playing a critical role in the formation of the compact, mineralized, aprismatic enamel surface layer during the maturation stage of amelogenesis. The sequence is that of Amelotin from Rattus norvegicus (Rat).